A 276-amino-acid chain; its full sequence is Diaminopimelate epimerase (276 aa).

Substrate is bound by residues Asn-13, Gln-46, and Asn-66. The active-site Proton donor is Cys-75. Substrate-binding positions include 76 to 77, Asn-159, Asn-192, and 210 to 211; these read GN and ER. Catalysis depends on Cys-219, which acts as the Proton acceptor. Residue 220-221 coordinates substrate; the sequence is GT.

It belongs to the diaminopimelate epimerase family. Homodimer.

The protein localises to the cytoplasm. It catalyses the reaction (2S,6S)-2,6-diaminopimelate = meso-2,6-diaminopimelate. It functions in the pathway amino-acid biosynthesis; L-lysine biosynthesis via DAP pathway; DL-2,6-diaminopimelate from LL-2,6-diaminopimelate: step 1/1. Its function is as follows. Catalyzes the stereoinversion of LL-2,6-diaminopimelate (L,L-DAP) to meso-diaminopimelate (meso-DAP), a precursor of L-lysine and an essential component of the bacterial peptidoglycan. In Pseudomonas aeruginosa (strain LESB58), this protein is Diaminopimelate epimerase.